The primary structure comprises 699 residues: Osmotic avoidance abnormal protein 3 (699 aa).

In terms of domain architecture, Kinesin motor spans 4–327 (SVRVAVRCRP…LRYANRAKNI (324 aa)). An ATP-binding site is contributed by 87 to 94 (GQTGSGKT). Residues 339-523 (DALLREYQEE…EIEDLHGEFE (185 aa)) are a coiled coil.

The protein belongs to the TRAFAC class myosin-kinesin ATPase superfamily. Kinesin family. Kinesin II subfamily. In terms of tissue distribution, expressed in an exclusive set of 26 chemosensory neurons whose dendritic endings are exposed to the external environment; six IL2 neurons of the inner labial sensilla, 8 pairs of amphid neurons in the head, and 2 pairs of phasmid neurons in the tail.

Its subcellular location is the cytoplasm. It is found in the cytoskeleton. The protein resides in the cell projection. It localises to the cilium. The protein localises to the cilium axoneme. Its subcellular location is the cilium basal body. Kinesin motor protein which is required for the anterograde intraflagellar transport (IFT) along the middle segment of the sensory neuron cilia together with the kinesin II motor complex (composed of klp-11, klp-20 and kap-1) and on its own, is required for IFT along the distal segment. In addition, regulates the length of cilia. May have a role during neurogenesis and axonal transport. The chain is Osmotic avoidance abnormal protein 3 from Caenorhabditis elegans.